We begin with the raw amino-acid sequence, 634 residues long: DNA gyrase subunit B (634 aa).

One can recognise a Toprim domain in the interval 416–530 (REIYIVEGDS…NGHVYIAMPP (115 aa)). The Mg(2+) site is built by Glu-422, Asp-495, and Asp-497.

It belongs to the type II topoisomerase GyrB family. As to quaternary structure, heterotetramer, composed of two GyrA and two GyrB chains. In the heterotetramer, GyrA contains the active site tyrosine that forms a transient covalent intermediate with DNA, while GyrB binds cofactors and catalyzes ATP hydrolysis. It depends on Mg(2+) as a cofactor. Requires Mn(2+) as cofactor. Ca(2+) serves as cofactor.

It is found in the cytoplasm. The catalysed reaction is ATP-dependent breakage, passage and rejoining of double-stranded DNA.. Functionally, a type II topoisomerase that negatively supercoils closed circular double-stranded (ds) DNA in an ATP-dependent manner to modulate DNA topology and maintain chromosomes in an underwound state. Negative supercoiling favors strand separation, and DNA replication, transcription, recombination and repair, all of which involve strand separation. Also able to catalyze the interconversion of other topological isomers of dsDNA rings, including catenanes and knotted rings. Type II topoisomerases break and join 2 DNA strands simultaneously in an ATP-dependent manner. This Borrelia hermsii protein is DNA gyrase subunit B.